The chain runs to 258 residues: 5'-nucleotidase SurE (258 aa).

A divalent metal cation is bound by residues Asp16, Asp17, Ser47, and Asn99.

This sequence belongs to the SurE nucleotidase family. A divalent metal cation is required as a cofactor.

The protein resides in the cytoplasm. The catalysed reaction is a ribonucleoside 5'-phosphate + H2O = a ribonucleoside + phosphate. Functionally, nucleotidase that shows phosphatase activity on nucleoside 5'-monophosphates. This Coxiella burnetii (strain CbuK_Q154) (Coxiella burnetii (strain Q154)) protein is 5'-nucleotidase SurE.